A 341-amino-acid polypeptide reads, in one-letter code: Ketol-acid reductoisomerase (NADP(+)) (341 aa).

Residues 1 to 182 form the KARI N-terminal Rossmann domain; the sequence is MTEMFYDDDA…GGTRAGVIKT (182 aa). NADP(+) is bound by residues 25 to 28, Lys48, Ser51, Ser53, and 83 to 86; these read YGSQ and DQHQ. The active site involves His108. Gly134 contributes to the NADP(+) binding site. The 146-residue stretch at 183–328 folds into the KARI C-terminal knotted domain; that stretch reads TFTEETETDL…RELRGLFSWQ (146 aa). The Mg(2+) site is built by Asp191, Glu195, Glu227, and Glu231. Residue Ser252 participates in substrate binding.

It belongs to the ketol-acid reductoisomerase family. The cofactor is Mg(2+).

The enzyme catalyses (2R)-2,3-dihydroxy-3-methylbutanoate + NADP(+) = (2S)-2-acetolactate + NADPH + H(+). The catalysed reaction is (2R,3R)-2,3-dihydroxy-3-methylpentanoate + NADP(+) = (S)-2-ethyl-2-hydroxy-3-oxobutanoate + NADPH + H(+). The protein operates within amino-acid biosynthesis; L-isoleucine biosynthesis; L-isoleucine from 2-oxobutanoate: step 2/4. Its pathway is amino-acid biosynthesis; L-valine biosynthesis; L-valine from pyruvate: step 2/4. Its function is as follows. Involved in the biosynthesis of branched-chain amino acids (BCAA). Catalyzes an alkyl-migration followed by a ketol-acid reduction of (S)-2-acetolactate (S2AL) to yield (R)-2,3-dihydroxy-isovalerate. In the isomerase reaction, S2AL is rearranged via a Mg-dependent methyl migration to produce 3-hydroxy-3-methyl-2-ketobutyrate (HMKB). In the reductase reaction, this 2-ketoacid undergoes a metal-dependent reduction by NADPH to yield (R)-2,3-dihydroxy-isovalerate. The polypeptide is Ketol-acid reductoisomerase (NADP(+)) (Arthrobacter sp. (strain FB24)).